The following is a 674-amino-acid chain: Ribonuclease E (674 aa).

In terms of domain architecture, S1 motif spans 35 to 117 (GDIYLGLVDN…LTGNISMPGR (83 aa)). Mg(2+) contacts are provided by D296 and D339. Zn(2+) contacts are provided by C397 and C400. Disordered regions lie at residues 458–529 (PLDL…RRVE) and 626–674 (QPRE…SSAE). 2 stretches are compositionally biased toward basic and acidic residues: residues 484 to 493 (GSEFSEKENI) and 509 to 529 (TKEK…RRVE). Basic residues predominate over residues 663–674 (RPGRRRRRSSAE). The C4 Arg-rich motif, probably responsible for interaction with PNPase motif lies at 665-673 (GRRRRRSSA).

It belongs to the RNase E/G family. In terms of assembly, fractionates in a 250-300 kDa region, which is too small to be the equivalent of an RNA degradosome, as occurs with E.coli RNase E. Interacts with polynucleotide phosphorylase (PNPase, pnp), probably via the C4 Arg-rich motif (residues 665-673). It depends on Mg(2+) as a cofactor.

The protein resides in the cytoplasm. Its subcellular location is the cell inner membrane. It catalyses the reaction Endonucleolytic cleavage of single-stranded RNA in A- and U-rich regions.. Functionally, endoribonuclease that plays a central role in rRNA processing and mRNA decay, and probably tRNA processing. Acts on 9S rRNA (the precursor of 5S rRNA) and RNAI, a molecule that controls the replication of ColE1 plasmid. Upon expression in E.coli does not purify with endogenous degradosome proteins. Prefers 5'-monophosphorylated substrates over 5'-triphosphorylated substrates. Complements an rne temperature-sensitive mutation in E.coli, despite being considerably shorter and not able to interact with the E.coli degradosome. Cleaves AU-rich sequences in vitro, tested with psbA2 mRNA. Complements both an rne temperature-sensitive mutation and an rng deletion in E.coli. Acts in the degradation of psaL mRNA in the presence but not the absence of the sRNA PsrR1. Cleaves the rimO-crhR transcript, contributing to the very short half-life of rimO mRNA. In terms of biological role, mRNA for psbA2, one of the core proteins in photosystem II, is degraded in the dark under control of a cis-acting AU-rich box in its 5'-UTR. RNase E cuts in this box, suggesting it is involved in this dark-induced mRNA instability. Its function is as follows. CRISPR (clustered regularly interspaced short palindromic repeat) is an adaptive immune system that provides protection against mobile genetic elements (viruses, transposable elements and conjugative plasmids). CRISPR clusters contain spacers, sequences complementary to antecedent mobile elements, and target invading nucleic acids. CRISPR clusters are transcribed and processed into CRISPR RNA (crRNA). Endogenous RNase E is required for correct processing of pre-crRNA for the CRISPR3 subtype III-B system in this genome (genes sll7080 to sll7095). This CRISPR3 system does not include a cas6 gene, which is the usual RNase involved in crRNA maturation. This is Ribonuclease E from Synechocystis sp. (strain ATCC 27184 / PCC 6803 / Kazusa).